We begin with the raw amino-acid sequence, 649 residues long: Acetyl-coenzyme A synthetase (649 aa).

CoA-binding positions include 191 to 194 (RGGR), Thr-311, and Asn-335. ATP contacts are provided by residues 387-389 (GEP), 411-416 (DTWWQT), Asp-500, and Arg-515. A CoA-binding site is contributed by Ser-523. Residue Arg-526 participates in ATP binding. Mg(2+) is bound by residues Val-537, Phe-539, and Ile-542. CoA is bound at residue Arg-584. Lys-609 carries the post-translational modification N6-acetyllysine.

The protein belongs to the ATP-dependent AMP-binding enzyme family. It depends on Mg(2+) as a cofactor. Post-translationally, acetylated. Deacetylation by the SIR2-homolog deacetylase activates the enzyme.

It catalyses the reaction acetate + ATP + CoA = acetyl-CoA + AMP + diphosphate. Catalyzes the conversion of acetate into acetyl-CoA (AcCoA), an essential intermediate at the junction of anabolic and catabolic pathways. AcsA undergoes a two-step reaction. In the first half reaction, AcsA combines acetate with ATP to form acetyl-adenylate (AcAMP) intermediate. In the second half reaction, it can then transfer the acetyl group from AcAMP to the sulfhydryl group of CoA, forming the product AcCoA. The chain is Acetyl-coenzyme A synthetase from Vibrio cholerae serotype O1 (strain ATCC 39315 / El Tor Inaba N16961).